Reading from the N-terminus, the 150-residue chain is Submaxillary gland androgen-regulated protein 2, isoform alpha (150 aa).

A signal peptide spans 1–22 (MKALYMVFVLWVLIGCFLSGEC).

Its subcellular location is the secreted. May play a role in protection or detoxification. The chain is Submaxillary gland androgen-regulated protein 2, isoform alpha (Smr2) from Mus musculus (Mouse).